Here is a 591-residue protein sequence, read N- to C-terminus: Putative BTB/POZ domain-containing protein At5g13600 (591 aa).

Positions 28-95 constitute a BTB domain; sequence PDVMIQVVDE…CYGVRIEVTP (68 aa). One can recognise an NPH3 domain in the interval 208-493; the sequence is NWWFNDVSSF…VQVLFFEQMR (286 aa). Tyr434 is subject to Phosphotyrosine.

The protein belongs to the NPH3 family.

It functions in the pathway protein modification; protein ubiquitination. Functionally, may act as a substrate-specific adapter of an E3 ubiquitin-protein ligase complex (CUL3-RBX1-BTB) which mediates the ubiquitination and subsequent proteasomal degradation of target proteins. The chain is Putative BTB/POZ domain-containing protein At5g13600 from Arabidopsis thaliana (Mouse-ear cress).